A 218-amino-acid polypeptide reads, in one-letter code: Oxygen regulatory protein NreC (218 aa).

The Response regulatory domain occupies 2–119; that stretch reads KIVIADDHAV…QLILAVRTVY (118 aa). Asp-53 bears the 4-aspartylphosphate mark. The HTH luxR-type domain maps to 149 to 214; sequence SSDPFKILSK…ELVEYALKKK (66 aa). Positions 173-192 form a DNA-binding region, H-T-H motif; it reads NKDIAEKLFVSVKTVEAHKT.

Phosphorylated by NreB.

It is found in the cytoplasm. Member of the two-component regulatory system NreB/NreC involved in the control of dissimilatory nitrate/nitrite reduction in response to oxygen. Phosphorylated NreC binds to a GC-rich palindromic sequence at the promoters of the nitrate (narGHJI) and nitrite (nir) reductase operons, as well as the putative nitrate transporter gene narT, and activates their expression. This is Oxygen regulatory protein NreC (nreC) from Staphylococcus epidermidis (strain ATCC 35984 / DSM 28319 / BCRC 17069 / CCUG 31568 / BM 3577 / RP62A).